Reading from the N-terminus, the 104-residue chain is uncharacterized protein (104 aa).

Belongs to the BolA/IbaG family.

This is an uncharacterized protein from Buchnera aphidicola subsp. Acyrthosiphon pisum (strain APS) (Acyrthosiphon pisum symbiotic bacterium).